The chain runs to 377 residues: Ribosomal RNA large subunit methyltransferase G (377 aa).

This sequence belongs to the methyltransferase superfamily. RlmG family.

It is found in the cytoplasm. It carries out the reaction guanosine(1835) in 23S rRNA + S-adenosyl-L-methionine = N(2)-methylguanosine(1835) in 23S rRNA + S-adenosyl-L-homocysteine + H(+). In terms of biological role, specifically methylates the guanine in position 1835 (m2G1835) of 23S rRNA. This chain is Ribosomal RNA large subunit methyltransferase G, found in Aeromonas salmonicida (strain A449).